A 525-amino-acid polypeptide reads, in one-letter code: Protein kinase PINOID 2 (525 aa).

Residues 1-27 (MANSSIFYKDNESDYESSTVGPDSSRR) are disordered. In terms of domain architecture, Protein kinase spans 87–465 (FRLLKRLGSG…SIEIKRHEFF (379 aa)). ATP contacts are provided by residues 93-101 (LGSGDIGSV) and Lys-118. Asp-214 (proton acceptor) is an active-site residue. In terms of domain architecture, AGC-kinase C-terminal spans 466-525 (EGVNWALIRSIKPPWVPKEETSHKTKGDNRSVNYYLPPRFMMSRKERNEPYHVSNYFDYF).

It belongs to the protein kinase superfamily. Ser/Thr protein kinase family.

The catalysed reaction is L-seryl-[protein] + ATP = O-phospho-L-seryl-[protein] + ADP + H(+). The enzyme catalyses L-threonyl-[protein] + ATP = O-phospho-L-threonyl-[protein] + ADP + H(+). Serine/threonine-protein kinase involved in the regulation of auxin signaling. Plays a minor role in the regulation of cellular auxin efflux and cotyledon organogenesis. The protein is Protein kinase PINOID 2 (PID2) of Arabidopsis thaliana (Mouse-ear cress).